Reading from the N-terminus, the 688-residue chain is Sodium channel and clathrin linker 1 (688 aa).

Ala2 carries the post-translational modification N-acetylalanine. Positions 69-673 (ELNGQLKYYQ…SASQQLSVIT (605 aa)) form a coiled coil. Ser681 carries the phosphoserine modification.

In terms of assembly, interacts with SCN10A and clathrin. Identified in a complex containing SCN10A, clathrin and SCLT1.

It is found in the cytoplasm. It localises to the cytoskeleton. Its subcellular location is the microtubule organizing center. The protein resides in the centrosome. The protein localises to the centriole. Its function is as follows. Adapter protein that links SCN10A to clathrin. Regulates SCN10A channel activity, possibly by promoting channel internalization. This chain is Sodium channel and clathrin linker 1 (SCLT1), found in Homo sapiens (Human).